We begin with the raw amino-acid sequence, 139 residues long: Acyl carrier protein 5, chloroplastic (139 aa).

The transit peptide at 1–54 (MATSFCSSISMQAPFSATTTRFCLNKQATIFNNEKTNNLSFSLRRLMPARLAVS) directs the protein to the chloroplast. The region spanning 59–134 (QETVEKVSEI…QAAELIEELV (76 aa)) is the Carrier domain. An O-(pantetheine 4'-phosphoryl)serine modification is found at serine 94.

Belongs to the acyl carrier protein (ACP) family. In terms of processing, 4'-phosphopantetheine is transferred from CoA to a specific serine of apo-ACP by acpS. This modification is essential for activity because fatty acids are bound in thioester linkage to the sulfhydryl of the prosthetic group.

It localises to the plastid. Its subcellular location is the chloroplast. Carrier of the growing fatty acid chain in fatty acid biosynthesis. This is Acyl carrier protein 5, chloroplastic (ACP5) from Arabidopsis thaliana (Mouse-ear cress).